A 127-amino-acid chain; its full sequence is Large ribosomal subunit protein bL12 (127 aa).

This sequence belongs to the bacterial ribosomal protein bL12 family. In terms of assembly, homodimer. Part of the ribosomal stalk of the 50S ribosomal subunit. Forms a multimeric L10(L12)X complex, where L10 forms an elongated spine to which 2 to 4 L12 dimers bind in a sequential fashion. Binds GTP-bound translation factors.

Functionally, forms part of the ribosomal stalk which helps the ribosome interact with GTP-bound translation factors. Is thus essential for accurate translation. This chain is Large ribosomal subunit protein bL12, found in Rhizobium etli (strain CIAT 652).